The chain runs to 797 residues: Protocadherin-3 (797 aa).

Residues 1–30 (METALAKIPQQRQVFFLTILSLLWKSSSEA) form the signal peptide. Residues 31 to 691 (IRYSMPEETE…DNYDVLTLYL (661 aa)) are Extracellular-facing. 5 Cadherin domains span residues 35-133 (MPEE…SPEF), 138-242 (MLLT…SPQF), 247-346 (YKVQ…APEL), 351-450 (LTVL…APAF), and 455-560 (YTMF…APFV). 3 N-linked (GlcNAc...) asparagine glycosylation sites follow: asparagine 169, asparagine 276, and asparagine 417. A glycan (N-linked (GlcNAc...) asparagine) is linked at asparagine 566. Positions 567–670 (ASAPCTELLP…VVDGFSQPYL (104 aa)) constitute a Cadherin 6 domain. A helical transmembrane segment spans residues 692–712 (VIALASVSSLFLLSVVLFVGV). At 713–797 (RLCRRAREAS…AVVHNSVGFY (85 aa)) the chain is on the cytoplasmic side.

In terms of tissue distribution, expressed in brain.

Its subcellular location is the cell membrane. Potential calcium-dependent cell-adhesion protein. May be involved in the establishment and maintenance of specific neuronal connections in the brain. The protein is Protocadherin-3 (Pcdh3) of Rattus norvegicus (Rat).